The chain runs to 535 residues: Cytochrome P450 monooxygenase BOA7 (535 aa).

Residues 20 to 37 (SIFLILGFFVLAAILIAW) traverse the membrane as a helical segment. Residues Asn65, Asn148, Asn180, and Asn420 are each glycosylated (N-linked (GlcNAc...) asparagine). Cys478 is a heme binding site.

It belongs to the cytochrome P450 family. Requires heme as cofactor.

It localises to the membrane. Its pathway is polyketide biosynthesis. In terms of biological role, cytochrome P450 monooxygenase; part of the gene cluster B that mediates the biosynthesis of botcinic acid and its botcinin derivatives, acetate-derived polyketides that contribute to virulence when combined with the sesquiterpene botrydial. Botcinic acid and its derivatives have been shown to induce chlorosis and necrosis during host plant infection, but also have antifungal activities. Two polyketide synthases, BOA6 and BOA9, are involved in the biosynthesis of botcinins. BOA6 mediates the formation of the per-methylated tetraketide core by condensation of four units of malonyl-CoA with one unit of acetyl-CoA, which would be methylated in activated methylene groups to yield a bicyclic acid intermediate that could then either be converted to botrylactone derivatives or lose the starter acetate unit through a retro-Claisen type C-C bond cleavage to yield botcinin derivatives. The second polyketide synthase, BOA9, is probably required for the biosynthesis of the tetraketide side chain of botcinins. The methyltransferase (MT) domain within BOA6 is probably responsible for the incorporation of four methyl groups. The trans-enoyl reductase BOA5 might take over the enoyl reductase function of BOA6 that misses an ER domain. The monooxygenases BOA2, BOA3 and BOA4 might be involved in further hydroxylations at C4, C5 and C8, whereas BOA7, close to BOA9, could potentially be involved in the hydroxylation at C4 in the side chain of botcinins. This Botryotinia fuckeliana (strain B05.10) (Noble rot fungus) protein is Cytochrome P450 monooxygenase BOA7.